The chain runs to 610 residues: MIQVLLVTICLAAFPYQGSSIILESGDVNDYEVVYPRKVTALPKGAVQQKYEDAMQYEFKVNGEPVVLHLEKNKHLFSKDYSETHYSPDGREITINPPVEDHCYYHGRIENDGDSTASISACNGLKGNFKLQGETYLIEPMKLSDSEAHAVFKYENVEKEDEAPKMCGVTQKWKSYEPIKKISQLNLIPEQQIYDPFKYVETVVVVDKAMVTKYNGDLDKIKTKMYEAANNMNEMYRYMFFRVVMVGLIIWTEEDKITVKPDVDYTLNAFAEWRKTYLLAEKKHDNAQLITGIDFRGSIIGYAYIGSMCHPKRSVGIIQDYSPINLVLAVIMAHEMGHNLGIHHDDGYCYCGGYPCIMGPSISPEPSKFFSNCSYIQCWDFIMNHNPECIDNEPLGTDIISPPLCGNELLEVGEECDCGTPENCQNECCDAATCKLKSGSQCGHGDCCEQCKFRTSGTECRASMSECDPAEHCTGQSSECPADVFHKNGEPCLDNYGYCYNGNCPIMYHQCYALFGADIYEAEDSCFESNKKGNYYGYCRKENGKKIPCASEDVKCGRLYCKDDSPGQNNPCKMFYSNDDEHKGMVLPGTKCADGKVCSNGHCVDVTTAY.

The first 20 residues, 1–20, serve as a signal peptide directing secretion; sequence MIQVLLVTICLAAFPYQGSS. The propeptide occupies 21-191; the sequence is IILESGDVND…ISQLNLIPEQ (171 aa). Gln192 is subject to Pyrrolidone carboxylic acid. A Peptidase M12B domain is found at 198-394; sequence KYVETVVVVD…HNPECIDNEP (197 aa). 2 residues coordinate Ca(2+): Glu201 and Asp285. Intrachain disulfides connect Cys309/Cys389, Cys349/Cys373, and Cys351/Cys356. His334 is a Zn(2+) binding site. The active site involves Glu335. Positions 338 and 344 each coordinate Zn(2+). An N-linked (GlcNAc...) asparagine glycan is attached at Asn372. Ca(2+) contacts are provided by Cys389, Asn392, Asn407, Leu409, Glu411, Glu414, and Asp417. A Disintegrin domain is found at 402 to 488; that stretch reads PPLCGNELLE…ECPADVFHKN (87 aa). 14 disulfides stabilise this stretch: Cys405/Cys434, Cys416/Cys429, Cys418/Cys424, Cys428/Cys451, Cys442/Cys448, Cys447/Cys473, Cys460/Cys480, Cys467/Cys499, Cys492/Cys504, Cys511/Cys561, Cys526/Cys572, Cys539/Cys549, Cys556/Cys598, and Cys592/Cys603. The D/ECD-tripeptide motif lies at 466–468; that stretch reads ECD. Ca(2+) is bound by residues Asp468, Pro469, Glu471, Asp483, and Val484.

This sequence belongs to the venom metalloproteinase (M12B) family. P-III subfamily. P-IIIa sub-subfamily. In terms of assembly, monomer. Requires Zn(2+) as cofactor. In terms of processing, N-glycosylated. As to expression, expressed by the venom gland.

It is found in the secreted. With respect to regulation, the proteinase activity is slightly enhanced by Ca(2+) and Mg(2+), but is completely inhibited by Zn(2+). Is completely inhibited by phenanthroline and EDTA. Not inhibited by PMSF. Functionally, snake venom zinc metalloprotease that causes hemorrhage and dose-dependently inhibits platelet aggregation triggered by collagen. This inhibition is due to its binding to glycoprotein VI (GP6) and collagen. The binding to GP6 results in inhibition of the signaling pathway (decrease of tyrosine phosphorylation of signaling proteins such as Syk, LAT, PI3-K and PLCgamma2). Preferentially cleaves alpha chain (FGA) of fibrinogen, followed by beta chain (FGB). Also degrades the extracellular matrix protein fibronectin (FN1), and cleaves collagen and von Willebrand factor (VWF). The protein is Zinc metalloproteinase-disintegrin-like acurhagin of Deinagkistrodon acutus (Hundred-pace snake).